A 367-amino-acid chain; its full sequence is UDP-N-acetylglucosamine--N-acetylmuramyl-(pentapeptide) pyrophosphoryl-undecaprenol N-acetylglucosamine transferase (367 aa).

Residues 15-17, Asn-127, Arg-163, Ser-191, Ile-249, and Gln-294 each bind UDP-N-acetyl-alpha-D-glucosamine; that span reads TGG.

The protein belongs to the glycosyltransferase 28 family. MurG subfamily.

The protein localises to the cell inner membrane. It catalyses the reaction di-trans,octa-cis-undecaprenyl diphospho-N-acetyl-alpha-D-muramoyl-L-alanyl-D-glutamyl-meso-2,6-diaminopimeloyl-D-alanyl-D-alanine + UDP-N-acetyl-alpha-D-glucosamine = di-trans,octa-cis-undecaprenyl diphospho-[N-acetyl-alpha-D-glucosaminyl-(1-&gt;4)]-N-acetyl-alpha-D-muramoyl-L-alanyl-D-glutamyl-meso-2,6-diaminopimeloyl-D-alanyl-D-alanine + UDP + H(+). The protein operates within cell wall biogenesis; peptidoglycan biosynthesis. Its function is as follows. Cell wall formation. Catalyzes the transfer of a GlcNAc subunit on undecaprenyl-pyrophosphoryl-MurNAc-pentapeptide (lipid intermediate I) to form undecaprenyl-pyrophosphoryl-MurNAc-(pentapeptide)GlcNAc (lipid intermediate II). In Burkholderia lata (strain ATCC 17760 / DSM 23089 / LMG 22485 / NCIMB 9086 / R18194 / 383), this protein is UDP-N-acetylglucosamine--N-acetylmuramyl-(pentapeptide) pyrophosphoryl-undecaprenol N-acetylglucosamine transferase.